A 954-amino-acid polypeptide reads, in one-letter code: Valine--tRNA ligase (954 aa).

The 'HIGH' region motif lies at 48 to 58 (PNVTGSLHMGH). Positions 560–564 (KMSKS) match the 'KMSKS' region motif. Position 563 (lysine 563) interacts with ATP. The stretch at 883–953 (AGFINKEAEL…IQEQYKAIEA (71 aa)) forms a coiled coil.

Belongs to the class-I aminoacyl-tRNA synthetase family. ValS type 1 subfamily. In terms of assembly, monomer.

It localises to the cytoplasm. The enzyme catalyses tRNA(Val) + L-valine + ATP = L-valyl-tRNA(Val) + AMP + diphosphate. In terms of biological role, catalyzes the attachment of valine to tRNA(Val). As ValRS can inadvertently accommodate and process structurally similar amino acids such as threonine, to avoid such errors, it has a 'posttransfer' editing activity that hydrolyzes mischarged Thr-tRNA(Val) in a tRNA-dependent manner. This is Valine--tRNA ligase from Haemophilus influenzae (strain PittEE).